The primary structure comprises 302 residues: 4-hydroxy-tetrahydrodipicolinate synthase (302 aa).

Residue Thr50 coordinates pyruvate. Residue Tyr138 is the Proton donor/acceptor of the active site. Lys167 acts as the Schiff-base intermediate with substrate in catalysis. Val209 provides a ligand contact to pyruvate.

The protein belongs to the DapA family. Homotetramer; dimer of dimers.

It is found in the cytoplasm. It carries out the reaction L-aspartate 4-semialdehyde + pyruvate = (2S,4S)-4-hydroxy-2,3,4,5-tetrahydrodipicolinate + H2O + H(+). The protein operates within amino-acid biosynthesis; L-lysine biosynthesis via DAP pathway; (S)-tetrahydrodipicolinate from L-aspartate: step 3/4. Functionally, catalyzes the condensation of (S)-aspartate-beta-semialdehyde [(S)-ASA] and pyruvate to 4-hydroxy-tetrahydrodipicolinate (HTPA). In Salinibacter ruber (strain DSM 13855 / M31), this protein is 4-hydroxy-tetrahydrodipicolinate synthase.